Consider the following 431-residue polypeptide: Gamma-glutamyl phosphate reductase (431 aa).

It belongs to the gamma-glutamyl phosphate reductase family.

The protein resides in the cytoplasm. The enzyme catalyses L-glutamate 5-semialdehyde + phosphate + NADP(+) = L-glutamyl 5-phosphate + NADPH + H(+). Its pathway is amino-acid biosynthesis; L-proline biosynthesis; L-glutamate 5-semialdehyde from L-glutamate: step 2/2. Its function is as follows. Catalyzes the NADPH-dependent reduction of L-glutamate 5-phosphate into L-glutamate 5-semialdehyde and phosphate. The product spontaneously undergoes cyclization to form 1-pyrroline-5-carboxylate. The protein is Gamma-glutamyl phosphate reductase of Methylobacterium nodulans (strain LMG 21967 / CNCM I-2342 / ORS 2060).